Here is a 153-residue protein sequence, read N- to C-terminus: D-aminoacyl-tRNA deacylase (153 aa).

Residues 140–141 (GP) carry the Gly-cisPro motif, important for rejection of L-amino acids motif.

This sequence belongs to the DTD family. Homodimer.

Its subcellular location is the cytoplasm. It carries out the reaction glycyl-tRNA(Ala) + H2O = tRNA(Ala) + glycine + H(+). The catalysed reaction is a D-aminoacyl-tRNA + H2O = a tRNA + a D-alpha-amino acid + H(+). In terms of biological role, an aminoacyl-tRNA editing enzyme that deacylates mischarged D-aminoacyl-tRNAs. Also deacylates mischarged glycyl-tRNA(Ala), protecting cells against glycine mischarging by AlaRS. Acts via tRNA-based rather than protein-based catalysis; rejects L-amino acids rather than detecting D-amino acids in the active site. By recycling D-aminoacyl-tRNA to D-amino acids and free tRNA molecules, this enzyme counteracts the toxicity associated with the formation of D-aminoacyl-tRNA entities in vivo and helps enforce protein L-homochirality. The polypeptide is D-aminoacyl-tRNA deacylase (Trichodesmium erythraeum (strain IMS101)).